A 126-amino-acid polypeptide reads, in one-letter code: Ribosome-binding factor A (126 aa).

Belongs to the RbfA family. In terms of assembly, monomer. Binds 30S ribosomal subunits, but not 50S ribosomal subunits or 70S ribosomes.

Its subcellular location is the cytoplasm. Functionally, one of several proteins that assist in the late maturation steps of the functional core of the 30S ribosomal subunit. Associates with free 30S ribosomal subunits (but not with 30S subunits that are part of 70S ribosomes or polysomes). Required for efficient processing of 16S rRNA. May interact with the 5'-terminal helix region of 16S rRNA. The protein is Ribosome-binding factor A of Azoarcus sp. (strain BH72).